A 146-amino-acid chain; its full sequence is Snaclec 5 (146 aa).

A signal peptide spans 1–23 (MGRFIFISFGLLVVFLSLSGTEA). Cystine bridges form between Cys25–Cys36, Cys53–Cys142, and Cys119–Cys134. Residues 32 to 143 (YEGHCYRVFD…CRNYGHFVCK (112 aa)) enclose the C-type lectin domain.

Belongs to the snaclec family. In terms of assembly, heterodimer; disulfide-linked. Expressed by the venom gland.

Its subcellular location is the secreted. Its function is as follows. Interferes with one step of hemostasis (modulation of platelet aggregation, or coagulation cascade, for example). This Echis pyramidum leakeyi (Leakey's carpet viper) protein is Snaclec 5.